The primary structure comprises 62 residues: MNEDDYKIRRGNAAELFSGIRHIAINILTNEKVFKAGLRRKMRKAAMDRNYLASVLAGSGLS.

This is an uncharacterized protein from Escherichia coli (strain K12).